The following is a 26-amino-acid chain: Guentherin (26 aa).

Expressed by the skin glands.

The protein resides in the secreted. Its function is as follows. Antimicrobial peptide. Active against the Gram-positive bacteria S.aureus FDA209P (MIC=35.5 ug/ml) and B.subtilis ATCC 6633 (MIC&gt;64 ug/ml), but not active against the Gram-negative bacterium E.coli or the fungus C.albicans. In Sylvirana guentheri (Gunther's frog), this protein is Guentherin.